We begin with the raw amino-acid sequence, 437 residues long: MVAPRISFVSLGCPKALVDSERIITSLRSEGYEISRQHQGADVVIVNTCGFLDSARKESLANIDEALKENGKVIVTGCLGADPDVIRQTYPNVLAITGPQAYESVIEAVHTAIPPIHDPFLDLVPPQGIRLTPRHYAYLKISEGCSNRCSFCIIPTLRGDLTSRPISDVLREAEKLVQAGVKELLVISQDTSAYGIDLKYLENSWKDRTIKTKFFDLCRELGDMGIWVRMHYVYPYPHVDEVIELMAAKKILPYLDIPFQHASPTVLRHMKRPALMEKTNRRIEKWRKICPDLTLRSTFIVGFPGETNEDFNMLLEWLEDAKIERAGCFKYEEVKGAVANDLGLENIPEDVKENRWHRFMAKQQQISTHLLKKKIGKRLQVLIDESQGKVAKGRSQYDAPEIDGVVHISSRRPLRVGEFVTVKIEQSDAYDLYGIAV.

An MTTase N-terminal domain is found at P4–P114. [4Fe-4S] cluster is bound by residues C13, C49, C78, C145, C149, and C152. One can recognise a Radical SAM core domain in the interval L131 to H369. Positions K372–V437 constitute a TRAM domain.

It belongs to the methylthiotransferase family. RimO subfamily. [4Fe-4S] cluster serves as cofactor.

It localises to the cytoplasm. It catalyses the reaction L-aspartate(89)-[ribosomal protein uS12]-hydrogen + (sulfur carrier)-SH + AH2 + 2 S-adenosyl-L-methionine = 3-methylsulfanyl-L-aspartate(89)-[ribosomal protein uS12]-hydrogen + (sulfur carrier)-H + 5'-deoxyadenosine + L-methionine + A + S-adenosyl-L-homocysteine + 2 H(+). Functionally, catalyzes the methylthiolation of an aspartic acid residue of ribosomal protein uS12. This is Ribosomal protein uS12 methylthiotransferase RimO from Bartonella tribocorum (strain CIP 105476 / IBS 506).